Here is a 194-residue protein sequence, read N- to C-terminus: dITP/XTP pyrophosphatase (194 aa).

Substrate is bound at residue 9–14 (THNPGK). Residues aspartate 40 and aspartate 69 each contribute to the Mg(2+) site. Aspartate 69 serves as the catalytic Proton acceptor. Substrate contacts are provided by residues serine 70, 152–155 (FGYD), lysine 175, and 180–181 (HR).

It belongs to the HAM1 NTPase family. Homodimer. Requires Mg(2+) as cofactor.

It carries out the reaction XTP + H2O = XMP + diphosphate + H(+). The catalysed reaction is dITP + H2O = dIMP + diphosphate + H(+). It catalyses the reaction ITP + H2O = IMP + diphosphate + H(+). Functionally, pyrophosphatase that catalyzes the hydrolysis of nucleoside triphosphates to their monophosphate derivatives, with a high preference for the non-canonical purine nucleotides XTP (xanthosine triphosphate), dITP (deoxyinosine triphosphate) and ITP. Seems to function as a house-cleaning enzyme that removes non-canonical purine nucleotides from the nucleotide pool, thus preventing their incorporation into DNA/RNA and avoiding chromosomal lesions. This Caulobacter vibrioides (strain ATCC 19089 / CIP 103742 / CB 15) (Caulobacter crescentus) protein is dITP/XTP pyrophosphatase.